The primary structure comprises 385 residues: 1-deoxy-D-xylulose 5-phosphate reductoisomerase (385 aa).

Residues threonine 10, glycine 11, serine 12, isoleucine 13, and asparagine 124 each coordinate NADPH. Residue lysine 125 coordinates 1-deoxy-D-xylulose 5-phosphate. Glutamate 126 lines the NADPH pocket. Aspartate 150 contributes to the Mn(2+) binding site. 1-deoxy-D-xylulose 5-phosphate contacts are provided by serine 151, glutamate 152, serine 176, and histidine 199. Position 152 (glutamate 152) interacts with Mn(2+). Residue glycine 205 participates in NADPH binding. Positions 212, 217, 218, and 221 each coordinate 1-deoxy-D-xylulose 5-phosphate. Glutamate 221 contacts Mn(2+).

This sequence belongs to the DXR family. It depends on Mg(2+) as a cofactor. Requires Mn(2+) as cofactor.

The enzyme catalyses 2-C-methyl-D-erythritol 4-phosphate + NADP(+) = 1-deoxy-D-xylulose 5-phosphate + NADPH + H(+). Its pathway is isoprenoid biosynthesis; isopentenyl diphosphate biosynthesis via DXP pathway; isopentenyl diphosphate from 1-deoxy-D-xylulose 5-phosphate: step 1/6. Functionally, catalyzes the NADPH-dependent rearrangement and reduction of 1-deoxy-D-xylulose-5-phosphate (DXP) to 2-C-methyl-D-erythritol 4-phosphate (MEP). The sequence is that of 1-deoxy-D-xylulose 5-phosphate reductoisomerase from Clostridium botulinum (strain Eklund 17B / Type B).